Consider the following 374-residue polypeptide: DNA-directed RNA polymerase subunit alpha (374 aa).

The interval 1–270 (MIFDEDSSSV…DQFQQFINFD (270 aa)) is alpha N-terminal domain (alpha-NTD). The interval 282-374 (KDVLPYDSNL…ESLSKQYSEE (93 aa)) is alpha C-terminal domain (alpha-CTD).

Belongs to the RNA polymerase alpha chain family. As to quaternary structure, homodimer. The RNAP catalytic core consists of 2 alpha, 1 beta, 1 beta' and 1 omega subunit. When a sigma factor is associated with the core the holoenzyme is formed, which can initiate transcription.

The enzyme catalyses RNA(n) + a ribonucleoside 5'-triphosphate = RNA(n+1) + diphosphate. Functionally, DNA-dependent RNA polymerase catalyzes the transcription of DNA into RNA using the four ribonucleoside triphosphates as substrates. In Ehrlichia ruminantium (strain Welgevonden), this protein is DNA-directed RNA polymerase subunit alpha.